Consider the following 423-residue polypeptide: Lipoyl synthase 1, mitochondrial (423 aa).

Cysteine 127, cysteine 132, cysteine 138, cysteine 159, cysteine 163, cysteine 166, and serine 375 together coordinate [4Fe-4S] cluster. The 223-residue stretch at 142–364 (DEEEGTATAT…EEEAMAMGFL (223 aa)) folds into the Radical SAM core domain.

Belongs to the radical SAM superfamily. Lipoyl synthase family. The cofactor is [4Fe-4S] cluster.

The protein resides in the mitochondrion. The enzyme catalyses [[Fe-S] cluster scaffold protein carrying a second [4Fe-4S](2+) cluster] + N(6)-octanoyl-L-lysyl-[protein] + 2 oxidized [2Fe-2S]-[ferredoxin] + 2 S-adenosyl-L-methionine + 4 H(+) = [[Fe-S] cluster scaffold protein] + N(6)-[(R)-dihydrolipoyl]-L-lysyl-[protein] + 4 Fe(3+) + 2 hydrogen sulfide + 2 5'-deoxyadenosine + 2 L-methionine + 2 reduced [2Fe-2S]-[ferredoxin]. Its pathway is protein modification; protein lipoylation via endogenous pathway; protein N(6)-(lipoyl)lysine from octanoyl-[acyl-carrier-protein]: step 2/2. Catalyzes the radical-mediated insertion of two sulfur atoms into the C-6 and C-8 positions of the octanoyl moiety bound to the lipoyl domains of lipoate-dependent enzymes, thereby converting the octanoylated domains into lipoylated derivatives. In Trypanosoma cruzi (strain CL Brener), this protein is Lipoyl synthase 1, mitochondrial.